The sequence spans 640 residues: RAP domain-containing protein, chloroplastic (640 aa).

Residues 1–32 (MEAALLRPPPLAARGGVSIAIAFSVSRLPSAA) constitute a chloroplast transit peptide. Residues 111-158 (SLQRMVASPKKKNKKKKSKKTNLKQKKAAEPKPPRDTDDDEDDEEEAD) are disordered. Positions 119–136 (PKKKNKKKKSKKTNLKQK) are enriched in basic residues. Residues 137–146 (KAAEPKPPRD) are compositionally biased toward basic and acidic residues. A compositionally biased stretch (acidic residues) spans 147-158 (TDDDEDDEEEAD). The RAP domain occupies 575 to 633 (LAFEIDGPSHFSRNLGTPLGHTAFKRRYIAAAGWNLVSLSHQEWENLEGEFEQLEYLRR).

As to expression, expressed in roots, leaf sheaths, veins of leaf blade, mature leaves, endodermis of culm, panicles and anthers.

The protein resides in the plastid. It localises to the chloroplast. In terms of biological role, probable RNA-binding protein that plays an essential role in chloroplast development. Regulates the ribosomal proteins homeostasis and ribosomal RNA development in chloroplasts. Involved the regulation of 16S rRNA and required for the expression of chloroplast-associated photosynthetic genes. The chain is RAP domain-containing protein, chloroplastic from Oryza sativa subsp. japonica (Rice).